The sequence spans 338 residues: Ketol-acid reductoisomerase (NADP(+)) (338 aa).

Residues 1-181 enclose the KARI N-terminal Rossmann domain; it reads MKVYYDKDAD…GGTRGGVIET (181 aa). Residues 24 to 27, Arg47, and Ser52 each bind NADP(+); that span reads YGSQ. Residue His107 is part of the active site. Gly133 serves as a coordination point for NADP(+). Positions 182-327 constitute a KARI C-terminal knotted domain; it reads TFKEETETDL…AKLRDMMPWI (146 aa). Residues Asp190, Glu194, Glu226, and Glu230 each coordinate Mg(2+). Ser251 is a binding site for substrate.

Belongs to the ketol-acid reductoisomerase family. It depends on Mg(2+) as a cofactor.

It catalyses the reaction (2R)-2,3-dihydroxy-3-methylbutanoate + NADP(+) = (2S)-2-acetolactate + NADPH + H(+). The catalysed reaction is (2R,3R)-2,3-dihydroxy-3-methylpentanoate + NADP(+) = (S)-2-ethyl-2-hydroxy-3-oxobutanoate + NADPH + H(+). Its pathway is amino-acid biosynthesis; L-isoleucine biosynthesis; L-isoleucine from 2-oxobutanoate: step 2/4. It functions in the pathway amino-acid biosynthesis; L-valine biosynthesis; L-valine from pyruvate: step 2/4. Involved in the biosynthesis of branched-chain amino acids (BCAA). Catalyzes an alkyl-migration followed by a ketol-acid reduction of (S)-2-acetolactate (S2AL) to yield (R)-2,3-dihydroxy-isovalerate. In the isomerase reaction, S2AL is rearranged via a Mg-dependent methyl migration to produce 3-hydroxy-3-methyl-2-ketobutyrate (HMKB). In the reductase reaction, this 2-ketoacid undergoes a metal-dependent reduction by NADPH to yield (R)-2,3-dihydroxy-isovalerate. The polypeptide is Ketol-acid reductoisomerase (NADP(+)) (Nitrosomonas europaea (strain ATCC 19718 / CIP 103999 / KCTC 2705 / NBRC 14298)).